The chain runs to 1113 residues: Histone deacetylase 5 (1113 aa).

Residues 1–22 form a disordered region; it reads MNSPNESDGMSGREPSLGILPR. Residue lysine 35 forms a Glycyl lysine isopeptide (Lys-Gly) (interchain with G-Cter in SUMO2) linkage. Disordered regions lie at residues 39–63 and 187–272; these read PGAMPSSMGGGGGGSPSPVELRGAL and KEPT…SSPL. Residues 238 to 249 show a composition bias toward basic and acidic residues; the sequence is DSRDDFPLRKTA. Serine 250 is subject to Phosphoserine; by AMPK, CaMK1, SIK1 and PKD/PRKD1. Residues 263 to 272 are compositionally biased toward basic and acidic residues; sequence KVAERRSSPL. The residue at position 283 (threonine 283) is a Phosphothreonine; by PKC. The segment at 472–494 is disordered; it reads RTVGKLPRHRPLSRTQSSPLPQS. Positions 484-494 are enriched in low complexity; sequence SRTQSSPLPQS. Serine 488 carries the phosphoserine; by AMPK, CaMK1, SIK1 and PKD/PRKD1 modification. At lysine 523 the chain carries N6-acetyllysine. The segment at 526-611 is disordered; the sequence is TKTGELSRQP…PDEGPDLEES (86 aa). The segment covering 571–610 has biased composition (acidic residues); sequence STQEDLEEEEEEEEEEEEDCIQVKDEDGESGPDEGPDLEE. Phosphoserine occurs at positions 600 and 650. The interval 675-1019 is histone deacetylase; sequence GVVYDTFMLK…VSALLSVELQ (345 aa). Residues cysteine 687, cysteine 689, histidine 695, and cysteine 772 each contribute to the Zn(2+) site. Histidine 824 is an active-site residue. The Nuclear export signal motif lies at 1072 to 1113; that stretch reads EEAETVSAMALLSVGAEQAQAVATQEHSPRPAEEPMEQEPAL. The interval 1088–1113 is disordered; the sequence is EQAQAVATQEHSPRPAEEPMEQEPAL. Serine 1099 carries the phosphoserine modification.

Belongs to the histone deacetylase family. HD type 2 subfamily. As to quaternary structure, interacts with AHRR, BAHD1, BCOR, HDAC7, HDAC9, CTBP1, MEF2C, NCOR2, NRIP1, PHB2 and a 14-3-3 chaperone protein. Interacts with BCL6, DDIT3/CHOP, GRK5, KDM5B and MYOCD. Interacts with EP300 in the presence of TFAP2C. Interacts with ANKRA2. Interacts with CUL7 (as part of the 3M complex); negatively regulated by ANKRA2. Interacts with ZBTB7B; the interaction allows the recruitment of HDAC4 on CD8 loci for deacetylation and possible inhibition of CD8 genes expression. Interacts with RARA. In terms of processing, phosphorylated by AMPK, CaMK1, SIK1 and PRKD1 at Ser-250 and Ser-488. The phosphorylation is required for the export to the cytoplasm and inhibition. Phosphorylated by the PKC kinases PKN1 and PKN2, impairing nuclear import. Phosphorylated by GRK5, leading to nuclear export of HDAC5 and allowing MEF2-mediated transcription. Post-translationally, ubiquitinated. Polyubiquitination however does not lead to its degradation.

The protein localises to the nucleus. Its subcellular location is the cytoplasm. It catalyses the reaction N(6)-acetyl-L-lysyl-[histone] + H2O = L-lysyl-[histone] + acetate. Its function is as follows. Responsible for the deacetylation of lysine residues on the N-terminal part of the core histones (H2A, H2B, H3 and H4). Histone deacetylation gives a tag for epigenetic repression and plays an important role in transcriptional regulation, cell cycle progression and developmental events. Histone deacetylases act via the formation of large multiprotein complexes. Involved in muscle maturation by repressing transcription of myocyte enhancer MEF2C. During muscle differentiation, it shuttles into the cytoplasm, allowing the expression of myocyte enhancer factors. Serves as a corepressor of RARA and causes its deacetylation. In association with RARA, plays a role in the repression of microRNA-10a and thereby in the inflammatory response. This Mus musculus (Mouse) protein is Histone deacetylase 5 (Hdac5).